The primary structure comprises 430 residues: Glutamate-1-semialdehyde 2,1-aminomutase (430 aa).

Residue Lys-265 is modified to N6-(pyridoxal phosphate)lysine.

This sequence belongs to the class-III pyridoxal-phosphate-dependent aminotransferase family. HemL subfamily. In terms of assembly, homodimer. Pyridoxal 5'-phosphate is required as a cofactor.

It localises to the cytoplasm. It carries out the reaction (S)-4-amino-5-oxopentanoate = 5-aminolevulinate. Its pathway is porphyrin-containing compound metabolism; protoporphyrin-IX biosynthesis; 5-aminolevulinate from L-glutamyl-tRNA(Glu): step 2/2. In Shewanella putrefaciens (strain CN-32 / ATCC BAA-453), this protein is Glutamate-1-semialdehyde 2,1-aminomutase.